A 363-amino-acid polypeptide reads, in one-letter code: Aminomethyltransferase (363 aa).

Belongs to the GcvT family. In terms of assembly, the glycine cleavage system is composed of four proteins: P, T, L and H.

The enzyme catalyses N(6)-[(R)-S(8)-aminomethyldihydrolipoyl]-L-lysyl-[protein] + (6S)-5,6,7,8-tetrahydrofolate = N(6)-[(R)-dihydrolipoyl]-L-lysyl-[protein] + (6R)-5,10-methylene-5,6,7,8-tetrahydrofolate + NH4(+). Its function is as follows. The glycine cleavage system catalyzes the degradation of glycine. This chain is Aminomethyltransferase, found in Thermosipho melanesiensis (strain DSM 12029 / CIP 104789 / BI429).